Reading from the N-terminus, the 428-residue chain is L-rhamnonate dehydratase (428 aa).

Residues histidine 56 and arginine 82 each contribute to the substrate site. Aspartate 249, glutamate 275, and glutamate 303 together coordinate Mg(2+). Catalysis depends on histidine 352, which acts as the Proton acceptor. Position 372 (glutamate 372) interacts with substrate.

It belongs to the mandelate racemase/muconate lactonizing enzyme family. RhamD subfamily. As to quaternary structure, homooctamer; tetramer of dimers. It depends on Mg(2+) as a cofactor.

The catalysed reaction is L-rhamnonate = 2-dehydro-3-deoxy-L-rhamnonate + H2O. Functionally, catalyzes the dehydration of L-rhamnonate to 2-keto-3-deoxy-L-rhamnonate (KDR). This chain is L-rhamnonate dehydratase, found in Shigella sonnei (strain Ss046).